Here is a 441-residue protein sequence, read N- to C-terminus: Homoserine dehydrogenase (441 aa).

N17 and V18 together coordinate NADP(+). Positions 18, 37, and 47 each coordinate NAD(+). V18 is an NADPH binding site. Residues R49, R50, and K107 each coordinate NADP(+). Residue R49 coordinates NADPH. Residue K107 coordinates NADPH. Na(+) is bound by residues E131, V134, G136, and I138. NADP(+) contacts are provided by G189 and E192. L-homoserine contacts are provided by E192 and D203. K207 serves as the catalytic Proton donor. G309 provides a ligand contact to NADP(+). G309 contributes to the NAD(+) binding site. G309 contributes to the NADPH binding site. In terms of domain architecture, ACT spans 356–435 (YVSMNVADKP…VVQGVSSVIR (80 aa)).

This sequence belongs to the homoserine dehydrogenase family. Requires a metal cation as cofactor.

The catalysed reaction is L-homoserine + NADP(+) = L-aspartate 4-semialdehyde + NADPH + H(+). The enzyme catalyses L-homoserine + NAD(+) = L-aspartate 4-semialdehyde + NADH + H(+). The protein operates within amino-acid biosynthesis; L-methionine biosynthesis via de novo pathway; L-homoserine from L-aspartate: step 3/3. It functions in the pathway amino-acid biosynthesis; L-threonine biosynthesis; L-threonine from L-aspartate: step 3/5. Functionally, catalyzes the conversion of L-aspartate-beta-semialdehyde (L-Asa) to L-homoserine (L-Hse), the third step in the biosynthesis of threonine and methionine from aspartate. The chain is Homoserine dehydrogenase (hom) from Mycobacterium tuberculosis (strain CDC 1551 / Oshkosh).